The chain runs to 174 residues: Large ribosomal subunit protein bL12cz (174 aa).

The transit peptide at 1-45 directs the protein to the chloroplast; sequence MASTTFSSAFSILSLPSSSPSPPPSPPRTLPVANRRRRAAAVAST. Residues 1-46 form a disordered region; the sequence is MASTTFSSAFSILSLPSSSPSPPPSPPRTLPVANRRRRAAAVASTA. The segment covering 7-18 has biased composition (low complexity); that stretch reads SSAFSILSLPSS. Pro residues predominate over residues 19–29; sequence SPSPPPSPPRT.

Belongs to the bacterial ribosomal protein bL12 family.

It is found in the plastid. The protein localises to the chloroplast. This is Large ribosomal subunit protein bL12cz (RPL12-1) from Secale cereale (Rye).